A 775-amino-acid polypeptide reads, in one-letter code: Phenylalanine--tRNA ligase beta subunit (775 aa).

The 109-residue stretch at 39-147 (GIDLDGVVFG…EDFKPGTDAN (109 aa)) folds into the tRNA-binding domain. The 77-residue stretch at 394-470 (YKPKKVFLPQ…RVKGYEHYTS (77 aa)) folds into the B5 domain. Mg(2+)-binding residues include Asp448, Asp454, Glu457, and Glu458. The region spanning 681–774 (AKFPPVVRDI…LKEKYGVELR (94 aa)) is the FDX-ACB domain.

This sequence belongs to the phenylalanyl-tRNA synthetase beta subunit family. Type 1 subfamily. Tetramer of two alpha and two beta subunits. The cofactor is Mg(2+).

Its subcellular location is the cytoplasm. The enzyme catalyses tRNA(Phe) + L-phenylalanine + ATP = L-phenylalanyl-tRNA(Phe) + AMP + diphosphate + H(+). This is Phenylalanine--tRNA ligase beta subunit (pheT) from Aquifex aeolicus (strain VF5).